Consider the following 395-residue polypeptide: MAKEKFDRSKPHVNIGTIGHVDHGKTTLTAAITTVLAKKGLSELRSFDSIDNAPEEKERGITINTSHVEYQTANRHYAHVDCPGHADYVKNMVTGAAQMDGAIIVVAATDGPMPQTREHILLARQVNVPRLVVFMNKCDMVDDEEMLELVEMEMRELLSFYQFDGDNTPIIRGSALGALNGDAQWEDKVMELMEACDTWIPLPPREIDKPFLMPVEDVFSITGRGTVATGRIETGIVKVGEEVQIIGLGAAGKKSVVTGVEMFRKLLDQGEAGDNVGLLLRGIDKNEIKRGMVICHPGQVKEHSKFKAEVYILKKEEGGRHTPFHNKYRPQFYIRTLDVTGEITLPEGTEMVMPGDNVTIEVELIYPVACSVGLRFAIREGGRTVGAGQITELEN.

The 196-residue stretch at 10–205 (KPHVNIGTIG…CDTWIPLPPR (196 aa)) folds into the tr-type G domain. The tract at residues 19–26 (GHVDHGKT) is G1. Residue 19-26 (GHVDHGKT) coordinates GTP. Position 26 (threonine 26) interacts with Mg(2+). The segment at 60–64 (GITIN) is G2. The interval 81 to 84 (DCPG) is G3. GTP is bound by residues 81 to 85 (DCPGH) and 136 to 139 (NKCD). Positions 136–139 (NKCD) are G4. The G5 stretch occupies residues 174 to 176 (SAL).

Belongs to the TRAFAC class translation factor GTPase superfamily. Classic translation factor GTPase family. EF-Tu/EF-1A subfamily. Monomer.

The protein resides in the cytoplasm. The enzyme catalyses GTP + H2O = GDP + phosphate + H(+). Functionally, GTP hydrolase that promotes the GTP-dependent binding of aminoacyl-tRNA to the A-site of ribosomes during protein biosynthesis. In Parabacteroides distasonis (strain ATCC 8503 / DSM 20701 / CIP 104284 / JCM 5825 / NCTC 11152), this protein is Elongation factor Tu.